We begin with the raw amino-acid sequence, 481 residues long: MATTPINGHATKSPSLDAAEARRLKHNHADVVIIGAGVLGCALAVALGRQGRSVILLEASLKEPDRIVGELLQPGGVQALEKLGLRDCLEGIDSIPVKGYYVSYFNDPVPIPYPKPTPASPPPEGRCFHHGRFVMKLREAAMACPNVSVVETKATDLVTCSHTQQVLGVECTSKDNVRACYFGHLTVVADGYASKFRKQHHPHTPKVSSRFWGLELIDTKLPMPYYGHVLLSDNAPILLYQIGTHETRILVDIPENLPSASVKNGGVKSHMRNVVLPSLPESVQPAFIAALEQGQLRSMPNSFLPAATNTTPGLVILGDALNMRHPLTGGGMTVAFNDVVTLRNLLSPEKVPNLGDTKRVMKQLSTFHWERKKAASVINILAQALYSLFAADNQYLRALQRGCFRYFQLGLVDGPAGLLGGLIQKPSVLFVHFFSVALLSLWVLLREYPPYLFPVALFKCIMTFWTACVVIFPYMLIEAFC.

The chain crosses the membrane as a helical span at residues 28 to 48; that stretch reads HADVVIIGAGVLGCALAVALG. FAD contacts are provided by residues 38-39, 58-59, arginine 66, and arginine 138; these read VL and EA. N-linked (GlcNAc...) asparagine glycosylation occurs at asparagine 146. The FAD site is built by aspartate 319 and methionine 332. The next 2 helical transmembrane spans lie at 425–445 and 452–472; these read KPSV…WVLL and LFPV…VVIF.

The protein belongs to the squalene monooxygenase family. Requires FAD as cofactor.

The protein resides in the endoplasmic reticulum membrane. Its subcellular location is the microsome membrane. It carries out the reaction squalene + reduced [NADPH--hemoprotein reductase] + O2 = (S)-2,3-epoxysqualene + oxidized [NADPH--hemoprotein reductase] + H2O + H(+). Its pathway is steroid metabolism; ergosterol biosynthesis. Functionally, squalene epoxidase; part of the third module of ergosterol biosynthesis pathway that includes the late steps of the pathway. Erg1 catalyzes the epoxidation of squalene into 2,3-epoxysqualene. The third module or late pathway involves the ergosterol synthesis itself through consecutive reactions that mainly occur in the endoplasmic reticulum (ER) membrane. Firstly, the squalene synthase erg9 catalyzes the condensation of 2 farnesyl pyrophosphate moieties to form squalene, which is the precursor of all steroids. Squalene synthase is crucial for balancing the incorporation of farnesyl diphosphate (FPP) into sterol and nonsterol isoprene synthesis. Secondly, squalene is converted into lanosterol by the consecutive action of the squalene epoxidase erg1 and the lanosterol synthase erg7. Then, the delta(24)-sterol C-methyltransferase erg6 methylates lanosterol at C-24 to produce eburicol. Eburicol is the substrate of the sterol 14-alpha demethylase encoded by cyp51A and cyp51B, to yield 4,4,24-trimethyl ergosta-8,14,24(28)-trienol. The C-14 reductase erg24 then reduces the C14=C15 double bond which leads to 4,4-dimethylfecosterol. A sequence of further demethylations at C-4, involving the C-4 demethylation complex containing the C-4 methylsterol oxidases erg25A or erg25B, the sterol-4-alpha-carboxylate 3-dehydrogenase erg26 and the 3-keto-steroid reductase erg27, leads to the production of fecosterol via 4-methylfecosterol. The C-8 sterol isomerase erg2 then catalyzes the reaction which results in unsaturation at C-7 in the B ring of sterols and thus converts fecosterol to episterol. The sterol-C5-desaturase erg3B then catalyzes the introduction of a C-5 double bond in the B ring to produce 5-dehydroepisterol. The 2 other sterol-C5-desaturases, erg3A and erg3C, seem to be less important in ergosterol biosynthesis. The C-22 sterol desaturase erg5 further converts 5-dehydroepisterol into ergosta-5,7,22,24(28)-tetraen-3beta-ol by forming the C-22(23) double bond in the sterol side chain. Finally, ergosta-5,7,22,24(28)-tetraen-3beta-ol is substrate of the C-24(28) sterol reductases erg4A and erg4B to produce ergosterol. Possible alternative sterol biosynthetic pathways might exist from fecosterol to ergosterol, depending on the activities of the erg3 isoforms. This is Squalene epoxidase erg1 from Aspergillus fumigatus (strain ATCC MYA-4609 / CBS 101355 / FGSC A1100 / Af293) (Neosartorya fumigata).